A 253-amino-acid polypeptide reads, in one-letter code: 4-phosphopantoate--beta-alanine ligase (253 aa).

ATP-binding positions include R17, R39, D179–N181, R185–T186, and N197–L198.

The protein belongs to the archaeal phosphopantothenate synthetase family. As to quaternary structure, homodimer.

The enzyme catalyses (R)-4-phosphopantoate + beta-alanine + ATP = (R)-4'-phosphopantothenate + AMP + diphosphate + H(+). Its pathway is cofactor biosynthesis; coenzyme A biosynthesis. In terms of biological role, catalyzes the condensation of (R)-4-phosphopantoate and beta-alanine to 4'-phosphopantothenate in the CoA biosynthesis pathway. This chain is 4-phosphopantoate--beta-alanine ligase, found in Methanosarcina mazei (strain ATCC BAA-159 / DSM 3647 / Goe1 / Go1 / JCM 11833 / OCM 88) (Methanosarcina frisia).